The chain runs to 315 residues: Cysteine proteinase 1 (315 aa).

The signal sequence occupies residues 1–13 (MFTFILMFYIGYG). Positions 14–93 (IDFNTWVANN…KGEVRYLNIQ (80 aa)) are cleaved as a propeptide — activation peptide. 2 disulfides stabilise this stretch: Cys115/Cys161 and Cys152/Cys193. Residue Cys118 is part of the active site. Residues His259 and Asn279 contribute to the active site.

Belongs to the peptidase C1 family.

The protein localises to the lysosome. Inhibited by cysteine protease inhibitors ICP1 and ICP2. In terms of biological role, cysteine protease which degrades matrix proteins such as collagen, laminin and fibronectin and thus is involved in the destruction of human tissue. Can abolish adhesion. May play an important role in pathogenicity. The polypeptide is Cysteine proteinase 1 (Entamoeba histolytica (strain ATCC 30459 / HM-1:IMSS / ABRM)).